The primary structure comprises 263 residues: Pyrrolysine synthase (263 aa).

The L-pyrrolysine site is built by leucine 8, valine 57, isoleucine 64, and alanine 107. Lysine 155, valine 156, aspartate 175, cysteine 210, proline 228, isoleucine 230, and glutamate 249 together coordinate NAD(+).

It belongs to the PylD family.

The enzyme catalyses (3R)-3-methyl-D-ornithyl-N(6)-L-lysine + NAD(+) = L-pyrrolysine + NH4(+) + NADH + 2 H(+). Its pathway is amino-acid biosynthesis; L-pyrrolysine biosynthesis. Functionally, catalyzes the ultimate step of the pyrrolysine biosynthesis pathway by converting the isopeptide (3R)-3-methyl-D-ornithyl-N(6)-L-lysine to the 22nd proteinogenic amino acid. Is able to use surrogate substrates such as (3R)-D-ornithyl-N(6)-L-lysine in vitro. The polypeptide is Pyrrolysine synthase (Methanosarcina barkeri (strain Fusaro / DSM 804)).